A 156-amino-acid chain; its full sequence is Arginine repressor (156 aa).

This sequence belongs to the ArgR family.

The protein localises to the cytoplasm. Its pathway is amino-acid biosynthesis; L-arginine biosynthesis [regulation]. In terms of biological role, regulates arginine biosynthesis genes. This is Arginine repressor from Aliivibrio fischeri (strain ATCC 700601 / ES114) (Vibrio fischeri).